We begin with the raw amino-acid sequence, 361 residues long: Serpentine receptor class epsilon-32 (361 aa).

The next 7 helical transmembrane spans lie at 34 to 54 (IIELVFYISCFHLMTISLYVM), 66 to 86 (ILYIPMFCVWYGLIAGKLITI), 124 to 144 (LLIFGGFVQWHYMYTVVYGIL), 168 to 188 (IPIALTIITQFLAISTSLSVL), 195 to 215 (FLSHLPWIISCSLGALAYLFI), 256 to 276 (LVFVVFFYVAFVSFGMFALAF), and 286 to 306 (FVENFLFLNPYPICFTAMLTI).

This sequence belongs to the nematode receptor-like protein sre family.

Its subcellular location is the membrane. The sequence is that of Serpentine receptor class epsilon-32 (sre-32) from Caenorhabditis elegans.